Here is a 190-residue protein sequence, read N- to C-terminus: Mitochondrial inner membrane protease subunit 1 (190 aa).

Catalysis depends on residues S40 and K84.

Belongs to the peptidase S26 family. IMP1 subfamily. Component of the mitochondrial inner membrane peptidase (IMP) complex which at least consists of IMP1, IMP2 and SOM1.

It is found in the mitochondrion inner membrane. In terms of biological role, catalytic component of the mitochondrial inner membrane peptidase (IMP) complex. IMP catalyzes the removal of signal peptides required for the targeting of proteins from the mitochondrial matrix, across the inner membrane, into the inter-membrane space. The two catalytic IMP subunits seem to have non-overlapping substrate specificities. IMP1 substrates include nuclear encoded CYB2, mitochondrially encoded COX2, NADH-cytochrome b5 reductase and GUT2. The polypeptide is Mitochondrial inner membrane protease subunit 1 (IMP1) (Saccharomyces cerevisiae (strain ATCC 204508 / S288c) (Baker's yeast)).